A 434-amino-acid polypeptide reads, in one-letter code: Protein maelstrom homolog (434 aa).

A DNA-binding region (HMG box) is located at residues 4-73; it reads RRASRNAYYF…AQGKDSGPSE (70 aa).

It belongs to the maelstrom family. In terms of assembly, interacts with SMARCB1, SIN3B and DDX4. Interacts with piRNA-associated proteins TDRD1, PIWIL1 and PIWIL2. Interacts with Tex19.1 and, probably, Tex19.2. In terms of tissue distribution, testis-specific. Present in spermatocytes and round and early elongating spermatids.

The protein localises to the cytoplasm. It is found in the nucleus. Its function is as follows. Plays a central role during spermatogenesis by repressing transposable elements and preventing their mobilization, which is essential for the germline integrity. Acts via the piRNA metabolic process, which mediates the repression of transposable elements during meiosis by forming complexes composed of piRNAs and Piwi proteins and governs the methylation and subsequent repression of transposons. Its association with piP-bodies suggests a participation in the secondary piRNAs metabolic process. Required for the localization of germ-cell factors to the meiotic nuage. The protein is Protein maelstrom homolog of Mus musculus (Mouse).